The chain runs to 401 residues: Homeobox protein engrailed-1 (401 aa).

Disordered regions lie at residues 1–102 (MEEQ…PAAQ), 138–167 (GGGA…HSLG), 229–253 (SKPS…AKFP), and 293–315 (RPSS…DKRP). Over residues 13 to 48 (DSGLGAVAAAAPSGLSLSLSPGASGSSGSDGDSVPV) the composition is skewed to low complexity. Composition is skewed to pro residues over residues 49–64 (SPQP…PCLP) and 73–88 (PPHP…PPPQ). A compositionally biased stretch (low complexity) spans 89-102 (HLAAPAHQPQPAAQ). 2 stretches are compositionally biased toward gly residues: residues 138–147 (GGGAAAGGGS) and 234–243 (SGGGSGGNAG). The homeobox DNA-binding region spans 312 to 371 (DKRPRTAFTAEQLQRLKAEFQANRYITEQRRQTLAQELSLNESQIKIWFQNKRAKIKKAT).

This sequence belongs to the engrailed homeobox family.

The protein resides in the nucleus. In terms of biological role, required for proper formation of the apical ectodermal ridge and correct dorsal-ventral patterning in the limb. The polypeptide is Homeobox protein engrailed-1 (En1) (Mus musculus (Mouse)).